We begin with the raw amino-acid sequence, 291 residues long: Bifunctional protein FolD (291 aa).

Residues 167–169 and Ser192 each bind NADP(+); that span reads GRS.

This sequence belongs to the tetrahydrofolate dehydrogenase/cyclohydrolase family. Homodimer.

The catalysed reaction is (6R)-5,10-methylene-5,6,7,8-tetrahydrofolate + NADP(+) = (6R)-5,10-methenyltetrahydrofolate + NADPH. It carries out the reaction (6R)-5,10-methenyltetrahydrofolate + H2O = (6R)-10-formyltetrahydrofolate + H(+). Its pathway is one-carbon metabolism; tetrahydrofolate interconversion. Its function is as follows. Catalyzes the oxidation of 5,10-methylenetetrahydrofolate to 5,10-methenyltetrahydrofolate and then the hydrolysis of 5,10-methenyltetrahydrofolate to 10-formyltetrahydrofolate. The polypeptide is Bifunctional protein FolD (Leptospira biflexa serovar Patoc (strain Patoc 1 / Ames)).